A 534-amino-acid polypeptide reads, in one-letter code: Flavonoid-6-hydroxylase (534 aa).

The helical transmembrane segment at 3–23 (FISFVYTLIAFSSLLYFYLIW) threads the bilayer. C467 contributes to the heme binding site.

The protein belongs to the cytochrome P450 family. The cofactor is heme. In terms of tissue distribution, expressed in leaves.

Its subcellular location is the membrane. The catalysed reaction is genkwanin + reduced [NADPH--hemoprotein reductase] + O2 = scutellarein 7-methyl ether + oxidized [NADPH--hemoprotein reductase] + H2O. The enzyme catalyses (2S)-sakuranetin + reduced [NADPH--hemoprotein reductase] + O2 = (2S)-7-methylcarthamidin + oxidized [NADPH--hemoprotein reductase] + H2O + H(+). It carries out the reaction apigenin 4',7-dimethyl ether + reduced [NADPH--hemoprotein reductase] + O2 = ladanein + oxidized [NADPH--hemoprotein reductase] + H2O + H(+). It catalyses the reaction (2S)-naringenin 4',7-dimethyl ether + reduced [NADPH--hemoprotein reductase] + O2 = (2S)-carthamidin-4',7-dimethyl ether + oxidized [NADPH--hemoprotein reductase] + H2O + H(+). It participates in flavonoid metabolism. Its function is as follows. Hydroxylase involved in the biosynthesis of polymethoxylated flavonoids natural products such as nevadensin and salvigenin, aroma compounds which contribute to the flavor of sweet basil, and exhibit pharmacological activities such as anti-allergic, anti-oxidant, antibacterial, anti-proliferative, and anti-inflammatory effects. Catalyzes the 6-hydroxylation of 7-O-methylated precursors such as the conversion of genkwanin (GENK) to scutellarein-7-methyl ether (SCU7Me). Can also use, with a lower efficiency, apigenin-7,4'-dimethyl ether (AdM), naringenin-7-methyl ether (SAK) and naringenin-7,4'-dimethyl ether (NdM) as substrates. The protein is Flavonoid-6-hydroxylase of Ocimum basilicum (Sweet basil).